The primary structure comprises 840 residues: SLIT and NTRK-like protein 6 (840 aa).

The signal sequence occupies residues 1-18; it reads MKLWTYLLYPSLLACLSL. In terms of domain architecture, LRRNT 1 spans 22–67; the sequence is SPMPSVRGSCDTLCNCEEKDGIMIINCEEKGINKLSQISVPPSRPF. Residues 23–609 lie on the Extracellular side of the membrane; that stretch reads PMPSVRGSCD…LTDAVPLSVL (587 aa). LRR repeat units follow at residues 89 to 110, 113 to 134, 137 to 158, 161 to 182, and 184 to 205; these read NALS…AFNG, LLKQ…TFHG, NLEF…AFSK, RLKV…IFRF, and PLTH…GFLE. In terms of domain architecture, LRRCT 1 spans 218–269; sequence NKWACNCELLQLKNWLENMPPQSIIGDVICYSPPPFKGSVLSRLKKESFCPT. Residues 319–360 enclose the LRRNT 2 domain; that stretch reads PSTQLPVPYCPIPCNCKVLSPSGLLIHCQERNIESLSDLQPP. LRR repeat units lie at residues 363-384, 387-408, 411-432, 435-456, 459-480, and 482-503; these read NPRK…DLTD, TLEM…SFMN, RLQK…MFLG, SLEY…TFNP, KLKV…IFLG, and PLTR…NILD. The LRRCT 2 domain occupies 516-567; the sequence is NPWDCSCDLVGLQQWIHKLGKGTMTDDILCTSPGHLDKKELKALNSDLLCPG. The chain crosses the membrane as a helical span at residues 610-630; it reads ILGLLIVFITIVFCAAGIVVF. Topologically, residues 631–840 are cytoplasmic; sequence VLHRRRRYKK…DYLEVLEQQT (210 aa). Basic and acidic residues predominate over residues 717 to 726; that stretch reads QRSLLERENH. The interval 717-736 is disordered; sequence QRSLLERENHSPLTGSNMKY. A compositionally biased stretch (polar residues) spans 727 to 736; it reads SPLTGSNMKY.

It belongs to the SLITRK family. In the embryo, expressed in otic cyst, lateral trunk epidermis and underlying mesodermal tissue, limb bud, maxillary process, cochlea, retina, tongue, tooth primordium, central nervous system, and primordia of visceral organs including lung, gastrointestinal tract and pancreas. In the central nervous system, expressed primarily in dorsal thalamus, cerebellum and medulla.

The protein localises to the cell membrane. In terms of biological role, regulator of neurite outgrowth required for normal hearing and vision. This Mus musculus (Mouse) protein is SLIT and NTRK-like protein 6 (Slitrk6).